Reading from the N-terminus, the 131-residue chain is Universal stress protein C (131 aa).

The protein belongs to the universal stress protein A family.

It localises to the cytoplasm. In terms of biological role, required for resistance to DNA-damaging agents. The protein is Universal stress protein C (uspC) of Salmonella typhi.